Reading from the N-terminus, the 565-residue chain is MILYNIFLVKMKVDFINTVFPSSTKEYIPGTIYNNIKVGMRKIHFNDNTESILVYDTGGLHTDQNVEVDINHGITKLRLNWIIDRQDVEYYERQPVLNSEHIFTSQSNKVLRANSTKPVTQIFYARNNIITPEMEYIAIRENSLRQKILSYKPTVMSPEITPEFVRQEVASGRAIIPANINHPESEPMIIGKNFLVKINANIGNSVVSSNIEEEVQKMIHAITYGADTVMDLSTGNNIHDIREWIIRNSPVPIGTVPIYQALNKVNGVVGDLNFNVFKETLIEQAEQGVDYFTIHAGVLKNYISHTDNRLTGIVSRGGAIMAHWCTIHNKENFLYTNFEEICDIMKRYDIAFSLGDGLRPGSIADANDTAQFLELKTLGELTDIAWQHDCQAMIEGPGHVPMHLIKENMEKQIHFCKEAPFYTLGPLTTDIAPGYDHITSAIGAAITGWYGTSMLCYVTPKEHLGLPNIQDVKDGVIAYKIAAHAADLAKGNPSAYIRDYALSYARFNFKWHDQFNLSLDPETARSLHDESLPSEHAKSAHFCSMCGPKFCSMKLTHHLKEHSTG.

Residues Asn-201, Met-230, Tyr-259, His-295, 315 to 317 (SRG), 356 to 359 (DGLR), and Glu-395 contribute to the substrate site. His-399 serves as a coordination point for Zn(2+). Tyr-422 is a binding site for substrate. His-463 contacts Zn(2+). [4Fe-4S] cluster is bound by residues Cys-543, Cys-546, and Cys-551.

The protein belongs to the ThiC family. As to quaternary structure, homodimer. [4Fe-4S] cluster serves as cofactor.

It catalyses the reaction 5-amino-1-(5-phospho-beta-D-ribosyl)imidazole + S-adenosyl-L-methionine = 4-amino-2-methyl-5-(phosphooxymethyl)pyrimidine + CO + 5'-deoxyadenosine + formate + L-methionine + 3 H(+). The protein operates within cofactor biosynthesis; thiamine diphosphate biosynthesis. Functionally, catalyzes the synthesis of the hydroxymethylpyrimidine phosphate (HMP-P) moiety of thiamine from aminoimidazole ribotide (AIR) in a radical S-adenosyl-L-methionine (SAM)-dependent reaction. The sequence is that of Phosphomethylpyrimidine synthase from Ehrlichia canis (strain Jake).